A 385-amino-acid polypeptide reads, in one-letter code: UPF0284 protein PMT9312_0438 (385 aa).

It belongs to the UPF0284 family.

The chain is UPF0284 protein PMT9312_0438 from Prochlorococcus marinus (strain MIT 9312).